Consider the following 331-residue polypeptide: Biotin synthase (331 aa).

A Radical SAM core domain is found at 39–264 (SELQTCYLIS…VFPRSMVRLA (226 aa)). [4Fe-4S] cluster is bound by residues Cys54, Cys58, and Cys61. Positions 98, 130, 190, and 262 each coordinate [2Fe-2S] cluster.

The protein belongs to the radical SAM superfamily. Biotin synthase family. In terms of assembly, homodimer. Requires [4Fe-4S] cluster as cofactor. [2Fe-2S] cluster is required as a cofactor.

It catalyses the reaction (4R,5S)-dethiobiotin + (sulfur carrier)-SH + 2 reduced [2Fe-2S]-[ferredoxin] + 2 S-adenosyl-L-methionine = (sulfur carrier)-H + biotin + 2 5'-deoxyadenosine + 2 L-methionine + 2 oxidized [2Fe-2S]-[ferredoxin]. It participates in cofactor biosynthesis; biotin biosynthesis; biotin from 7,8-diaminononanoate: step 2/2. Functionally, catalyzes the conversion of dethiobiotin (DTB) to biotin by the insertion of a sulfur atom into dethiobiotin via a radical-based mechanism. The sequence is that of Biotin synthase from Chlamydia pneumoniae (Chlamydophila pneumoniae).